The following is an 81-amino-acid chain: Trefoil factor 1 (81 aa).

An N-terminal signal peptide occupies residues Met-1–Gly-23. Residues Glu-26 to Val-69 enclose the P-type domain. 3 disulfides stabilise this stretch: Cys-28-Cys-54, Cys-38-Cys-53, and Cys-48-Cys-65.

The protein localises to the secreted. Stabilizer of the mucous gel overlying the gastrointestinal mucosa that provides a physical barrier against various noxious agents. The protein is Trefoil factor 1 (TFF1) of Canis lupus familiaris (Dog).